Consider the following 55-residue polypeptide: uncharacterized protein (55 aa).

Residues 17 to 44 (QNVNIALTKKRLDTAQQNADQTLKMIQH) are a coiled coil.

This is an uncharacterized protein from Bacillus subtilis (strain 168).